The primary structure comprises 374 residues: Dual-specificity RNA methyltransferase RlmN (374 aa).

The Proton acceptor role is filled by glutamate 94. The Radical SAM core domain maps to glutamate 100 to aspartate 339. An intrachain disulfide couples cysteine 107 to cysteine 344. [4Fe-4S] cluster-binding residues include cysteine 114, cysteine 118, and cysteine 121. Residues glycine 168 to glutamate 169, serine 200, serine 222 to histidine 224, and asparagine 301 contribute to the S-adenosyl-L-methionine site. Cysteine 344 acts as the S-methylcysteine intermediate in catalysis.

This sequence belongs to the radical SAM superfamily. RlmN family. The cofactor is [4Fe-4S] cluster.

It is found in the cytoplasm. It carries out the reaction adenosine(2503) in 23S rRNA + 2 reduced [2Fe-2S]-[ferredoxin] + 2 S-adenosyl-L-methionine = 2-methyladenosine(2503) in 23S rRNA + 5'-deoxyadenosine + L-methionine + 2 oxidized [2Fe-2S]-[ferredoxin] + S-adenosyl-L-homocysteine. The catalysed reaction is adenosine(37) in tRNA + 2 reduced [2Fe-2S]-[ferredoxin] + 2 S-adenosyl-L-methionine = 2-methyladenosine(37) in tRNA + 5'-deoxyadenosine + L-methionine + 2 oxidized [2Fe-2S]-[ferredoxin] + S-adenosyl-L-homocysteine. In terms of biological role, specifically methylates position 2 of adenine 2503 in 23S rRNA and position 2 of adenine 37 in tRNAs. m2A2503 modification seems to play a crucial role in the proofreading step occurring at the peptidyl transferase center and thus would serve to optimize ribosomal fidelity. The chain is Dual-specificity RNA methyltransferase RlmN from Vibrio vulnificus (strain CMCP6).